The primary structure comprises 1086 residues: Receptor-type guanylate cyclase gcy-6 (1086 aa).

The signal sequence occupies residues 1–21 (MIGVYLRSVIFPLLFVIQTIC). The Extracellular segment spans residues 22-487 (QPPGNVFHLG…PANVFFQYIG (466 aa)). N-linked (GlcNAc...) asparagine glycosylation is found at N325, N343, N387, and N427. A helical membrane pass occupies residues 488–508 (WFIAAIIIIFFTIMGAILAFI). Residues 509–1086 (YLCHAKQQEV…APKILKKKQD (578 aa)) lie on the Cytoplasmic side of the membrane. Positions 560-836 (SSTLSEVGET…NDNLMDHVFN (277 aa)) constitute a Protein kinase domain. ATP-binding positions include 566–574 (VGETRNYLF) and K589. Residues 894-1024 (TLFFSDVVSF…DAVNTASRME (131 aa)) form the Guanylate cyclase domain.

This sequence belongs to the adenylyl cyclase class-4/guanylyl cyclase family. As to expression, expressed in both ASEL and ASER neurons throughout late embryonic and early larval stages. In adults, expressed asymmetrically in ASE left (ASEL) sensory neuron.

The protein resides in the cell membrane. It catalyses the reaction GTP = 3',5'-cyclic GMP + diphosphate. Functionally, guanylate cyclase involved in the production of the second messenger cGMP. Regulates chemotaxis responses toward the salt ion Mg(2+) and to a lesser extent toward Cl(1-) in ASE left (ASEL) sensory neuron. In Caenorhabditis elegans, this protein is Receptor-type guanylate cyclase gcy-6.